Consider the following 253-residue polypeptide: Tryptophan synthase alpha chain (253 aa).

Catalysis depends on proton acceptor residues Glu-47 and Asp-58.

This sequence belongs to the TrpA family. Tetramer of two alpha and two beta chains.

It carries out the reaction (1S,2R)-1-C-(indol-3-yl)glycerol 3-phosphate + L-serine = D-glyceraldehyde 3-phosphate + L-tryptophan + H2O. Its pathway is amino-acid biosynthesis; L-tryptophan biosynthesis; L-tryptophan from chorismate: step 5/5. Functionally, the alpha subunit is responsible for the aldol cleavage of indoleglycerol phosphate to indole and glyceraldehyde 3-phosphate. The sequence is that of Tryptophan synthase alpha chain from Desulforapulum autotrophicum (strain ATCC 43914 / DSM 3382 / VKM B-1955 / HRM2) (Desulfobacterium autotrophicum).